Consider the following 843-residue polypeptide: Protein P (843 aa).

The terminal protein domain (TP) stretch occupies residues 1–177 (MPLSYQHFRK…FCGSPYSWEQ (177 aa)). A spacer region spans residues 178 to 346 (DLQHGRLVFQ…YCLSHIVNLI (169 aa)). Disordered regions lie at residues 219–249 (RKSRLGPQPTQGQLAGRPQGGSGSIRARIHP) and 290–316 (STSKGHSSSGHAVELHHFPPNSSRSQS). Over residues 290–299 (STSKGHSSSG) the composition is skewed to polar residues. The tract at residues 347-690 (EDWGPCAEHG…YMTLYPVARQ (344 aa)) is polymerase/reverse transcriptase domain (RT). The Reverse transcriptase domain maps to 357–600 (EHRIRTPRTP…YSLNFMGYVI (244 aa)). Positions 429, 551, and 552 each coordinate Mg(2+).

It belongs to the hepadnaviridae P protein family.

The enzyme catalyses DNA(n) + a 2'-deoxyribonucleoside 5'-triphosphate = DNA(n+1) + diphosphate. It carries out the reaction Endonucleolytic cleavage to 5'-phosphomonoester.. Activated by host HSP70 and HSP40 in vitro to be able to bind the epsilon loop of the pgRNA. Because deletion of the RNase H region renders the protein partly chaperone-independent, the chaperones may be needed indirectly to relieve occlusion of the RNA-binding site by this domain. Inhibited by several reverse-transcriptase inhibitors: Lamivudine, Adefovir and Entecavir. In terms of biological role, multifunctional enzyme that converts the viral RNA genome into dsDNA in viral cytoplasmic capsids. This enzyme displays a DNA polymerase activity that can copy either DNA or RNA templates, and a ribonuclease H (RNase H) activity that cleaves the RNA strand of RNA-DNA heteroduplexes in a partially processive 3'- to 5'-endonucleasic mode. Neo-synthesized pregenomic RNA (pgRNA) are encapsidated together with the P protein, and reverse-transcribed inside the nucleocapsid. Initiation of reverse-transcription occurs first by binding the epsilon loop on the pgRNA genome, and is initiated by protein priming, thereby the 5'-end of (-)DNA is covalently linked to P protein. Partial (+)DNA is synthesized from the (-)DNA template and generates the relaxed circular DNA (RC-DNA) genome. After budding and infection, the RC-DNA migrates in the nucleus, and is converted into a plasmid-like covalently closed circular DNA (cccDNA). The activity of P protein does not seem to be necessary for cccDNA generation, and is presumably released from (+)DNA by host nuclear DNA repair machinery. The sequence is that of Protein P from Homo sapiens (Human).